A 160-amino-acid polypeptide reads, in one-letter code: Twist-related protein 2 (160 aa).

The disordered stretch occupies residues 1-63 (MEEGSSSPVS…GSPSAQSFEE (63 aa)). Positions 27 to 37 (KRFGRKRRYSK) are enriched in basic residues. A bHLH domain is found at 66–117 (SQRILANVRERQRTQSLNEAFAALRKIIPTLPSDKLSKIQTLKLAARYIDFL).

As to quaternary structure, efficient DNA binding requires dimerization with another bHLH protein. Forms a heterodimer with TCF3/E12. Also interacts with MEF2C. As to expression, expressed at low levels in sclerotome and dermatome of somites, and in limb buds at 10.5 dpc. Accumulates predominantly in dermatome, prevertebrae and derivatives of branchial arches by 13 dpc. Also expressed near surface of embryo and in chondrogenic cells. In adult, expressed at low levels in skin, bladder, uterus, aorta and heart.

Its subcellular location is the nucleus. It localises to the cytoplasm. In terms of biological role, binds to the E-box consensus sequence 5'-CANNTG-3' as a heterodimer and inhibits transcriptional activation by MYOD1, MYOG, MEF2A and MEF2C. Also represses expression of pro-inflammatory cytokines such as TNFA and IL1B. Involved in postnatal glycogen storage and energy metabolism. Inhibits the premature or ectopic differentiation of preosteoblast cells during osteogenesis, possibly by changing the internal signal transduction response of osteoblasts to external growth factors. This Mus musculus (Mouse) protein is Twist-related protein 2 (Twist2).